A 377-amino-acid chain; its full sequence is Succinyl-diaminopimelate desuccinylase (377 aa).

His66 lines the Zn(2+) pocket. Asp68 is a catalytic residue. A Zn(2+)-binding site is contributed by Asp99. Glu133 (proton acceptor) is an active-site residue. The Zn(2+) site is built by Glu134, Glu162, and His348.

It belongs to the peptidase M20A family. DapE subfamily. In terms of assembly, homodimer. Requires Zn(2+) as cofactor. The cofactor is Co(2+).

The enzyme catalyses N-succinyl-(2S,6S)-2,6-diaminopimelate + H2O = (2S,6S)-2,6-diaminopimelate + succinate. It participates in amino-acid biosynthesis; L-lysine biosynthesis via DAP pathway; LL-2,6-diaminopimelate from (S)-tetrahydrodipicolinate (succinylase route): step 3/3. In terms of biological role, catalyzes the hydrolysis of N-succinyl-L,L-diaminopimelic acid (SDAP), forming succinate and LL-2,6-diaminopimelate (DAP), an intermediate involved in the bacterial biosynthesis of lysine and meso-diaminopimelic acid, an essential component of bacterial cell walls. This chain is Succinyl-diaminopimelate desuccinylase, found in Xylella fastidiosa (strain M23).